The following is a 311-amino-acid chain: MKVAVIGAAGGIGQALALLLKNRLPAGSDLALYDIAPVTPGVAADLSHIPTPVSIKGYCGEDPTPALEGADVVLISAGVARKPGMDRSDLFNINAGIVKSLAEKIAVTCPKACIGIITNPVNTTVAIAAEVLKKAGVYDKNKLFGVTTLDVIRSETFVAELKGKNPGEICVPVIGGHSGVTILPLLSQVEGVEFTAEEVAALTPRIQNAGTEVVEAKAGGGSATLSMGQAACRFGLSLVKALSGEKGVVECAYVEGNGEHARFFAQPILLGKNGVEEIQHYGELSTFEQDALDSMLDTLKADIKIGEEFIK.

NAD(+)-binding positions include G7–G13 and D34. Substrate is bound by residues R81 and R87. Residues N94 and I117 to N119 contribute to the NAD(+) site. Residues N119 and R153 each coordinate substrate. The active-site Proton acceptor is the H177. M227 lines the NAD(+) pocket.

This sequence belongs to the LDH/MDH superfamily. MDH type 1 family. In terms of assembly, homodimer.

The enzyme catalyses (S)-malate + NAD(+) = oxaloacetate + NADH + H(+). Functionally, catalyzes the reversible oxidation of malate to oxaloacetate. In Aliivibrio salmonicida (strain LFI1238) (Vibrio salmonicida (strain LFI1238)), this protein is Malate dehydrogenase.